The primary structure comprises 351 residues: D-threonate 4-phosphate dehydrogenase (351 aa).

Positions 147 and 148 each coordinate substrate. A divalent metal cation-binding residues include His177, His221, and His276. 3 residues coordinate substrate: Lys284, Asn293, and Arg302.

This sequence belongs to the PdxA family. PdxA2 subfamily. As to quaternary structure, homodimer. A divalent metal cation is required as a cofactor.

It catalyses the reaction 4-O-phospho-D-threonate + NAD(+) = dihydroxyacetone phosphate + CO2 + NADH. Catalyzes the NAD-dependent oxidation and subsequent decarboxylation of D-threonate 4-phosphate to produce dihydroxyacetone phosphate (DHAP). Can also use 4-hydroxy-L-threonine 4-phosphate as substrate. The polypeptide is D-threonate 4-phosphate dehydrogenase (Bordetella bronchiseptica (strain ATCC BAA-588 / NCTC 13252 / RB50) (Alcaligenes bronchisepticus)).